The chain runs to 294 residues: MTADRPALRTGDRDTRLSFGSNLSSFTDYLRGHAPELLPENRIGHRSHSTRGGDGMESGDLAPHGTTIVALTYKGGVLLAGDRRATQGNLIASRDVEKVYVTDEYSAAGIAGTAGIAIELVRLFAVELEHYEKIEGVPLTFDGKANRLASMVRGNLGAAMQGLAVVPLLVGYDLDADDESRAGRIVSYDVVGGRYEERAGYHAVGSGSLFAKSALKKIYSPDSDEETALRAAIESLYDAADDDSATGGPDLTRGIYPTAVTITQAGAVHVSEETTSELARRIVAERTEQGGSAR.

Positions 1–65 are cleaved as a propeptide — removed in mature form; by autocatalysis; sequence MTADRPALRT…MESGDLAPHG (65 aa). Catalysis depends on Thr66, which acts as the Nucleophile.

This sequence belongs to the peptidase T1B family. The 20S proteasome core is composed of 14 alpha and 14 beta subunits that assemble into four stacked heptameric rings, resulting in a barrel-shaped structure. The two inner rings, each composed of seven catalytic beta subunits, are sandwiched by two outer rings, each composed of seven alpha subunits. All four combinations of alpha- and beta-subunits (beta2-alpha1, beta2-alpha2, beta1-alpha2 and beta1-alpha1) yield fully assembled and proteolytically active proteasomes. The catalytic chamber with the active sites is on the inside of the barrel. Has probably a gated structure, the ends of the cylinder being occluded by the N-termini of the alpha-subunits. Is likely capped by the proteasome-associated ATPase, ARC.

It localises to the cytoplasm. It carries out the reaction Cleavage of peptide bonds with very broad specificity.. It participates in protein degradation; proteasomal Pup-dependent pathway. With respect to regulation, the formation of the proteasomal ATPase ARC-20S proteasome complex, likely via the docking of the C-termini of ARC into the intersubunit pockets in the alpha-rings, may trigger opening of the gate for substrate entry. Interconversion between the open-gate and close-gate conformations leads to a dynamic regulation of the 20S proteasome proteolysis activity. Component of the proteasome core, a large protease complex with broad specificity involved in protein degradation. The R.erythropolis proteasomes are able to cleave oligopeptides after Tyr, Phe and Leu, very poorly after Arg but not after Glu. Thus, displays chymotrypsin-like activity, low trypsin-like activity but no caspase-like activity. The sequence is that of Proteasome subunit beta 1 from Rhodococcus erythropolis (Arthrobacter picolinophilus).